The following is a 192-amino-acid chain: Ion-translocating oxidoreductase complex subunit B (192 aa).

The tract at residues 1-26 is hydrophobic; it reads MTAIWIAIAALSALALAFGLVLGYAS. In terms of domain architecture, 4Fe-4S spans 32-91; that stretch reads ENDPIVEEVEAMLPQSQCGQCGYPGCRPYAEAVSLNGESINKCGPGGEAMMLKLAEKLNV. Cys49, Cys52, Cys57, Cys74, Cys117, Cys120, Cys123, Cys127, Cys147, Cys150, Cys153, and Cys157 together coordinate [4Fe-4S] cluster. 2 consecutive 4Fe-4S ferredoxin-type domains span residues 108–137 and 138–167; these read HVAW…GSTK and AVHT…LRPI.

Belongs to the 4Fe4S bacterial-type ferredoxin family. RnfB subfamily. As to quaternary structure, the complex is composed of six subunits: RnfA, RnfB, RnfC, RnfD, RnfE and RnfG. Requires [4Fe-4S] cluster as cofactor.

Its subcellular location is the cell inner membrane. Part of a membrane-bound complex that couples electron transfer with translocation of ions across the membrane. The chain is Ion-translocating oxidoreductase complex subunit B from Pectobacterium atrosepticum (strain SCRI 1043 / ATCC BAA-672) (Erwinia carotovora subsp. atroseptica).